The chain runs to 254 residues: Thiazole synthase (254 aa).

Lysine 95 serves as the catalytic Schiff-base intermediate with DXP. Residues glycine 156, 182 to 183 (AG), and 204 to 205 (NT) contribute to the 1-deoxy-D-xylulose 5-phosphate site.

It belongs to the ThiG family. In terms of assembly, homotetramer. Forms heterodimers with either ThiH or ThiS.

The protein resides in the cytoplasm. The catalysed reaction is [ThiS sulfur-carrier protein]-C-terminal-Gly-aminoethanethioate + 2-iminoacetate + 1-deoxy-D-xylulose 5-phosphate = [ThiS sulfur-carrier protein]-C-terminal Gly-Gly + 2-[(2R,5Z)-2-carboxy-4-methylthiazol-5(2H)-ylidene]ethyl phosphate + 2 H2O + H(+). It participates in cofactor biosynthesis; thiamine diphosphate biosynthesis. Its function is as follows. Catalyzes the rearrangement of 1-deoxy-D-xylulose 5-phosphate (DXP) to produce the thiazole phosphate moiety of thiamine. Sulfur is provided by the thiocarboxylate moiety of the carrier protein ThiS. In vitro, sulfur can be provided by H(2)S. The sequence is that of Thiazole synthase from Shewanella oneidensis (strain ATCC 700550 / JCM 31522 / CIP 106686 / LMG 19005 / NCIMB 14063 / MR-1).